Reading from the N-terminus, the 122-residue chain is Large ribosomal subunit protein uL14 (122 aa).

It belongs to the universal ribosomal protein uL14 family. As to quaternary structure, part of the 50S ribosomal subunit. Forms a cluster with proteins L3 and L19. In the 70S ribosome, L14 and L19 interact and together make contacts with the 16S rRNA in bridges B5 and B8.

Its function is as follows. Binds to 23S rRNA. Forms part of two intersubunit bridges in the 70S ribosome. The chain is Large ribosomal subunit protein uL14 from Streptococcus thermophilus (strain CNRZ 1066).